A 245-amino-acid polypeptide reads, in one-letter code: tRNA (guanine-N(1)-)-methyltransferase (245 aa).

S-adenosyl-L-methionine is bound by residues glycine 113 and 133-138 (IGDYVL).

It belongs to the RNA methyltransferase TrmD family. Homodimer.

The protein resides in the cytoplasm. It catalyses the reaction guanosine(37) in tRNA + S-adenosyl-L-methionine = N(1)-methylguanosine(37) in tRNA + S-adenosyl-L-homocysteine + H(+). Specifically methylates guanosine-37 in various tRNAs. The chain is tRNA (guanine-N(1)-)-methyltransferase from Histophilus somni (strain 129Pt) (Haemophilus somnus).